The following is a 274-amino-acid chain: MHFIFIILSLSFVVNADVFPSSVTLSSNDFDTIIKWDNNVISYDVELMQYSHDEWRTVCTNSLGYCNLTNSDIDNDDETWVRFKYENKTSNEHNIGRVCEIVQITSPIVNMTRDGSIILLDIHHPMTYDNQYYIYNNITLCGFEFIYEATFIINDTIIPYSIDNQYCDDVHCLFYFISQEPVCVYVMGMEQYYEFGPKKTDNSTRVCVDGLIPRKIDTYFIKDFDDIDRVNNRLYRVVSDKYESNISSKFMHLYNNILSSFKLILQELMVNTEQ.

It belongs to the type II cytokine receptor family.

This is an uncharacterized protein from Sus scrofa (Pig).